Consider the following 304-residue polypeptide: Ribonuclease Z (304 aa).

The Zn(2+) site is built by His63, His65, Asp67, His68, His143, Asp213, and His271. Residue Asp67 is the Proton acceptor of the active site.

Belongs to the RNase Z family. As to quaternary structure, homodimer. It depends on Zn(2+) as a cofactor.

The enzyme catalyses Endonucleolytic cleavage of RNA, removing extra 3' nucleotides from tRNA precursor, generating 3' termini of tRNAs. A 3'-hydroxy group is left at the tRNA terminus and a 5'-phosphoryl group is left at the trailer molecule.. Zinc phosphodiesterase, which displays some tRNA 3'-processing endonuclease activity. Probably involved in tRNA maturation, by removing a 3'-trailer from precursor tRNA. The sequence is that of Ribonuclease Z from Porphyromonas gingivalis (strain ATCC BAA-308 / W83).